Consider the following 532-residue polypeptide: Putative F-box/LRR-repeat protein At3g42770 (532 aa).

The F-box domain maps to Met-1–Ser-46. 3 LRR repeats span residues Val-113–Ser-135, Ile-279–Met-305, and Met-398–Leu-420.

In Arabidopsis thaliana (Mouse-ear cress), this protein is Putative F-box/LRR-repeat protein At3g42770.